A 790-amino-acid chain; its full sequence is Sodium- and chloride-dependent glycine transporter 2 (790 aa).

A disordered region spans residues 1-39 (MDYVNVVDGSKKTMNSPEGAAPGLIGATGITNPTPDNDL). Topologically, residues 1–192 (MDYVNVVDGS…ARGNWSNKLD (192 aa)) are cytoplasmic. The next 3 membrane-spanning stretches (helical) occupy residues 193–213 (FILSMVGYAVGLGNVWRFPYL), 220–240 (GAFLIPYLTMLALAGLPIFYL), and 264–284 (GCGIAMLIISVLIAIYYNIIM). Residues G199, A201, V202, and N206 each coordinate Na(+). The Extracellular portion of the chain corresponds to 285 to 387 (CYTIFYLFAS…GIEYPGEIRW (103 aa)). A disulfide bond links C304 and C313. N-linked (GlcNAc...) asparagine glycosylation is found at N336, N346, N351, and N357. A run of 3 helical transmembrane segments spans residues 388 to 408 (PLVFCLFLAWIIVYASLAKGI), 427 to 447 (VILLFRGVTLPGAGDGIWWFI), and 463 to 483 (AATQIFFSLSAAWGGLITLSS). Residues S470 and N502 each coordinate Na(+). 6 helical membrane-spanning segments follow: residues 504–524 (ATSIFAGFVIFSVIGFMAHIL), 556–576 (WAIIFFLMLLTLGLDTMFATI), 597–617 (LFTLVCCVAFFIMGFPMITQG), 631–651 (SYSLVIIAIFELVGISYIYGL), 672–692 (ICWAFVTPTILTFILGFSFYQ), and 708–728 (MVMGWLMLACSVIWIPIMFVI). The Na(+) site is built by L567 and D570. Residues 729–790 (KMFLAPGTFI…PKDFELGTQC (62 aa)) lie on the Cytoplasmic side of the membrane.

The protein belongs to the sodium:neurotransmitter symporter (SNF) (TC 2.A.22) family. SLC6A5 subfamily. In terms of tissue distribution, first expressed in late neurula stages in the anterior spinal cord, where expression intensifies through the tailbud stages, and by hatching, expression is seen in the hindbrain. During late hatching stages, expression extends along most of the length of the spinal cord, mildly intensifies in the hindbrain, and appears in localized regions of the lateral forebrain and medial midbrain. By the swimming tadpole stage, weak expression appears in the anterior hindbrain, with stronger expression in the posterior, postmitotic neurons.

It localises to the cell membrane. The catalysed reaction is glycine(out) + chloride(out) + 3 Na(+)(out) = glycine(in) + chloride(in) + 3 Na(+)(in). Functionally, sodium- and chloride-dependent glycine transporter. Terminates the action of glycine by its high affinity sodium-dependent reuptake into presynaptic terminals. May be responsible for the termination of neurotransmission at strychnine-sensitive glycinergic synapses. In Xenopus laevis (African clawed frog), this protein is Sodium- and chloride-dependent glycine transporter 2.